The chain runs to 357 residues: Endo-1,4-beta-xylanase Xyn11B (357 aa).

Residues Met1 to Ala27 form the signal peptide. The region spanning Thr29 to Ser226 is the GH11 domain. The active-site Nucleophile is Glu116. Glu213 serves as the catalytic Proton donor. The disordered stretch occupies residues Ser220–Gly245.

This sequence belongs to the glycosyl hydrolase 11 (cellulase G) family.

Its subcellular location is the secreted. It carries out the reaction Endohydrolysis of (1-&gt;4)-beta-D-xylosidic linkages in xylans.. The protein operates within glycan degradation; xylan degradation. Endo-acting xylanase which specifically cleaves internal linkages on the xylan backbone, releasing xylooligosaccharides. Is able to hydrolyze glucuronoxylan and the arabinoxylan from wheat. This chain is Endo-1,4-beta-xylanase Xyn11B (xyn11B), found in Cellvibrio japonicus (Pseudomonas fluorescens subsp. cellulosa).